Consider the following 490-residue polypeptide: Aspartyl/glutamyl-tRNA(Asn/Gln) amidotransferase subunit B (490 aa).

It belongs to the GatB/GatE family. GatB subfamily. In terms of assembly, heterotrimer of A, B and C subunits.

The catalysed reaction is L-glutamyl-tRNA(Gln) + L-glutamine + ATP + H2O = L-glutaminyl-tRNA(Gln) + L-glutamate + ADP + phosphate + H(+). The enzyme catalyses L-aspartyl-tRNA(Asn) + L-glutamine + ATP + H2O = L-asparaginyl-tRNA(Asn) + L-glutamate + ADP + phosphate + 2 H(+). Allows the formation of correctly charged Asn-tRNA(Asn) or Gln-tRNA(Gln) through the transamidation of misacylated Asp-tRNA(Asn) or Glu-tRNA(Gln) in organisms which lack either or both of asparaginyl-tRNA or glutaminyl-tRNA synthetases. The reaction takes place in the presence of glutamine and ATP through an activated phospho-Asp-tRNA(Asn) or phospho-Glu-tRNA(Gln). The polypeptide is Aspartyl/glutamyl-tRNA(Asn/Gln) amidotransferase subunit B (Methylobacterium sp. (strain 4-46)).